The sequence spans 284 residues: NAD kinase (284 aa).

Asp67 serves as the catalytic Proton acceptor. NAD(+) contacts are provided by residues 67-68 (DG), 141-142 (ND), Arg152, Lys169, Asp171, 182-187 (TGYSLS), and Gln241.

It belongs to the NAD kinase family. A divalent metal cation is required as a cofactor.

It localises to the cytoplasm. It catalyses the reaction NAD(+) + ATP = ADP + NADP(+) + H(+). Involved in the regulation of the intracellular balance of NAD and NADP, and is a key enzyme in the biosynthesis of NADP. Catalyzes specifically the phosphorylation on 2'-hydroxyl of the adenosine moiety of NAD to yield NADP. This Geobacter sulfurreducens (strain ATCC 51573 / DSM 12127 / PCA) protein is NAD kinase.